Here is a 736-residue protein sequence, read N- to C-terminus: Phosphoribosylformylglycinamidine synthase subunit PurL (736 aa).

Histidine 49 is a catalytic residue. ATP is bound by residues tyrosine 52 and lysine 91. Glutamate 93 contributes to the Mg(2+) binding site. Residues 94-97 (SHNH) and arginine 116 contribute to the substrate site. Histidine 95 functions as the Proton acceptor in the catalytic mechanism. Position 117 (aspartate 117) interacts with Mg(2+). Residue glutamine 240 participates in substrate binding. Aspartate 268 is a binding site for Mg(2+). 312–314 (ESQ) is a binding site for substrate. Positions 493 and 530 each coordinate ATP. Asparagine 531 contacts Mg(2+). Residue serine 533 coordinates substrate.

Belongs to the FGAMS family. Monomer. Part of the FGAM synthase complex composed of 1 PurL, 1 PurQ and 2 PurS subunits.

The protein resides in the cytoplasm. It carries out the reaction N(2)-formyl-N(1)-(5-phospho-beta-D-ribosyl)glycinamide + L-glutamine + ATP + H2O = 2-formamido-N(1)-(5-O-phospho-beta-D-ribosyl)acetamidine + L-glutamate + ADP + phosphate + H(+). It functions in the pathway purine metabolism; IMP biosynthesis via de novo pathway; 5-amino-1-(5-phospho-D-ribosyl)imidazole from N(2)-formyl-N(1)-(5-phospho-D-ribosyl)glycinamide: step 1/2. Part of the phosphoribosylformylglycinamidine synthase complex involved in the purines biosynthetic pathway. Catalyzes the ATP-dependent conversion of formylglycinamide ribonucleotide (FGAR) and glutamine to yield formylglycinamidine ribonucleotide (FGAM) and glutamate. The FGAM synthase complex is composed of three subunits. PurQ produces an ammonia molecule by converting glutamine to glutamate. PurL transfers the ammonia molecule to FGAR to form FGAM in an ATP-dependent manner. PurS interacts with PurQ and PurL and is thought to assist in the transfer of the ammonia molecule from PurQ to PurL. The sequence is that of Phosphoribosylformylglycinamidine synthase subunit PurL from Rhodopseudomonas palustris (strain TIE-1).